The sequence spans 494 residues: 4-trimethylaminobutyraldehyde dehydrogenase (494 aa).

Serine 2 is modified (N-acetylserine). Lysine 30 is modified (N6-acetyllysine; alternate). Lysine 30 carries the N6-succinyllysine; alternate modification. Lysine 59 carries the post-translational modification N6-succinyllysine. NAD(+) is bound by residues lysine 180 and 232-236; that span reads GSVPT. Catalysis depends on glutamate 254, which acts as the Proton acceptor. The active-site Nucleophile is cysteine 288. The residue at position 298 (lysine 298) is an N6-acetyllysine. Position 303 is an N6-acetyllysine; alternate (lysine 303). Residue lysine 303 is modified to N6-succinyllysine; alternate. Lysine 344 is subject to N6-acetyllysine. Glutamate 391 is an NAD(+) binding site.

The protein belongs to the aldehyde dehydrogenase family. Homotetramer.

Its subcellular location is the cytoplasm. It is found in the cytosol. The enzyme catalyses 4-(trimethylamino)butanal + NAD(+) + H2O = 4-(trimethylamino)butanoate + NADH + 2 H(+). It catalyses the reaction an aldehyde + NAD(+) + H2O = a carboxylate + NADH + 2 H(+). It carries out the reaction 4-aminobutanal + NAD(+) + H2O = 4-aminobutanoate + NADH + 2 H(+). The catalysed reaction is formaldehyde + NAD(+) + H2O = formate + NADH + 2 H(+). The enzyme catalyses acetaldehyde + NAD(+) + H2O = acetate + NADH + 2 H(+). It catalyses the reaction imidazole-4-acetaldehyde + NAD(+) + H2O = imidazole-4-acetate + NADH + 2 H(+). It carries out the reaction acrolein + NAD(+) + H2O = acrylate + NADH + 2 H(+). The catalysed reaction is (5-hydroxyindol-3-yl)acetaldehyde + NAD(+) + H2O = (5-hydroxyindol-3-yl)acetate + NADH + 2 H(+). The enzyme catalyses 3,4-dihydroxyphenylacetaldehyde + NAD(+) + H2O = 3,4-dihydroxyphenylacetate + NADH + 2 H(+). It catalyses the reaction spermine monoaldehyde + NAD(+) + H2O = N-(2-carboxyethyl)spermidine + NADH + 2 H(+). It carries out the reaction propanal + NAD(+) + H2O = propanoate + NADH + 2 H(+). The catalysed reaction is butanal + NAD(+) + H2O = butanoate + NADH + 2 H(+). The enzyme catalyses pentanal + NAD(+) + H2O = pentanoate + NADH + 2 H(+). It catalyses the reaction hexanal + NAD(+) + H2O = hexanoate + NADH + 2 H(+). The protein operates within amine and polyamine biosynthesis; carnitine biosynthesis. Its function is as follows. Converts gamma-trimethylaminobutyraldehyde into gamma-butyrobetaine with high efficiency (in vitro). Can catalyze the irreversible oxidation of a broad range of aldehydes to the corresponding acids in an NAD-dependent reaction, but with low efficiency. Catalyzes the oxidation of aldehydes arising from biogenic amines and polyamines. The chain is 4-trimethylaminobutyraldehyde dehydrogenase from Mus musculus (Mouse).